A 262-amino-acid polypeptide reads, in one-letter code: Global transcriptional regulator CodY (262 aa).

Positions 1 to 159 (MAHLLEKTRK…ASTVVGIQLL (159 aa)) are GAF domain. Residues 207–226 (ASVIADRIGITRSVIVNALR) constitute a DNA-binding region (H-T-H motif).

It belongs to the CodY family.

The protein resides in the cytoplasm. DNA-binding global transcriptional regulator which is involved in the adaptive response to starvation and acts by directly or indirectly controlling the expression of numerous genes in response to nutrient availability. During rapid exponential growth, CodY is highly active and represses genes whose products allow adaptation to nutrient depletion. This Streptococcus pneumoniae (strain JJA) protein is Global transcriptional regulator CodY.